A 305-amino-acid polypeptide reads, in one-letter code: Outer membrane protein assembly factor BamD (305 aa).

Residues 1–24 form the signal peptide; it reads MLRIFQGRPAVTIAAVLVAASVAG. Residue Cys25 is the site of N-palmitoyl cysteine attachment. Cys25 carries S-diacylglycerol cysteine lipidation. 4 TPR repeats span residues 41 to 74, 78 to 111, 113 to 136, and 174 to 207; these read VELL…HPYS, RRSI…YPGN, SAQY…NRDQ, and AGKE…HQTT.

Belongs to the BamD family. Part of the Bam complex.

The protein resides in the cell outer membrane. Its function is as follows. Part of the outer membrane protein assembly complex, which is involved in assembly and insertion of beta-barrel proteins into the outer membrane. The chain is Outer membrane protein assembly factor BamD from Caulobacter vibrioides (strain ATCC 19089 / CIP 103742 / CB 15) (Caulobacter crescentus).